Here is a 98-residue protein sequence, read N- to C-terminus: MADIKFRPLHDRVVVRRVESEAKTAGGIIIPDTAKEKPQEGEVVAAGAGARDEAGKLVPLDVKAGDRVLFGKWSGTEVKIGGEDLLIMKESDILGIVG.

Belongs to the GroES chaperonin family. In terms of assembly, heptamer of 7 subunits arranged in a ring. Interacts with the chaperonin GroEL.

The protein localises to the cytoplasm. Together with the chaperonin GroEL, plays an essential role in assisting protein folding. The GroEL-GroES system forms a nano-cage that allows encapsulation of the non-native substrate proteins and provides a physical environment optimized to promote and accelerate protein folding. GroES binds to the apical surface of the GroEL ring, thereby capping the opening of the GroEL channel. This chain is Co-chaperonin GroES, found in Brucella abortus (strain S19).